Reading from the N-terminus, the 462-residue chain is Cytochrome P450 20A1 (462 aa).

The helical transmembrane segment at 4 to 24 (FAIFAVTFLLALVGAVLYLYP) threads the bilayer. Residue cysteine 409 coordinates heme.

It belongs to the cytochrome P450 family. Heme serves as cofactor.

Its subcellular location is the membrane. The chain is Cytochrome P450 20A1 (Cyp20a1) from Rattus norvegicus (Rat).